We begin with the raw amino-acid sequence, 135 residues long: ATP synthase epsilon chain (135 aa).

The protein belongs to the ATPase epsilon chain family. F-type ATPases have 2 components, CF(1) - the catalytic core - and CF(0) - the membrane proton channel. CF(1) has five subunits: alpha(3), beta(3), gamma(1), delta(1), epsilon(1). CF(0) has three main subunits: a, b and c.

The protein resides in the cell inner membrane. Its function is as follows. Produces ATP from ADP in the presence of a proton gradient across the membrane. This chain is ATP synthase epsilon chain, found in Rhodopseudomonas palustris (strain BisB18).